The following is a 419-amino-acid chain: UDP-N-acetylmuramoylalanine--D-glutamate ligase (419 aa).

Position 109–115 (109–115 (GSTGKTT)) interacts with ATP.

It belongs to the MurCDEF family.

Its subcellular location is the cytoplasm. It carries out the reaction UDP-N-acetyl-alpha-D-muramoyl-L-alanine + D-glutamate + ATP = UDP-N-acetyl-alpha-D-muramoyl-L-alanyl-D-glutamate + ADP + phosphate + H(+). It participates in cell wall biogenesis; peptidoglycan biosynthesis. Cell wall formation. Catalyzes the addition of glutamate to the nucleotide precursor UDP-N-acetylmuramoyl-L-alanine (UMA). The chain is UDP-N-acetylmuramoylalanine--D-glutamate ligase from Chlamydia felis (strain Fe/C-56) (Chlamydophila felis).